We begin with the raw amino-acid sequence, 629 residues long: MFYPDPFDVIIIGGGHAGTEAAMAAARMGQQTLLLTHNIDTLGQMSCNPAIGGIGKGHLVKEVDALGGLMAKAIDQAGIQFRILNASKGPAVRATRAQADRVLYRQAVRTALENQPNLMIFQQAVEDLIVENDRVVGAVTQMGLKFRAKAVVLTVGTFLDGKIHIGLDNYSGGRAGDPPSIPLSRRLRELPLRVGRLKTGTPPRIDARTIDFSVLAQQHGDNPMPVFSFMGNASQHPQQVPCYITHTNEKTHDVIRSNLDRSPMYAGVIEGVGPRYCPSIEDKVMRFADRNQHQIFLEPEGLTSNEIYPNGISTSLPFDVQMQIVRSMQGMENAKIVRPGYAIEYDFFDPRDLKPTLESKFIQGLFFAGQINGTTGYEEAAAQGLLAGLNAARLSADKEGWAPARSQAYLGVLVDDLCTLGTKEPYRMFTSRAEYRLMLREDNADLRLTEIGRELGLVDDERWARFNEKLENIERERQRLKSTWVTPSAEAAAEVNAHLTAPLSREASGEDLLRRPEMTYEKLTTLTPFAPALTDEQAAEQVEIQVKYEGYIARQQDEIEKQLRNENTLLPATLDYRQVSGLSNEVIAKLNDHKPASIGQASRISGVTPAAISILLVWLKKQGMLRRSA.

Residues 13-18, valine 125, and serine 180 each bind FAD; that span reads GGGHAG. 273 to 287 is an NAD(+) binding site; the sequence is GPRYCPSIEDKVMRF. An FAD-binding site is contributed by glutamine 370.

Belongs to the MnmG family. In terms of assembly, homodimer. Heterotetramer of two MnmE and two MnmG subunits. FAD is required as a cofactor.

The protein localises to the cytoplasm. In terms of biological role, NAD-binding protein involved in the addition of a carboxymethylaminomethyl (cmnm) group at the wobble position (U34) of certain tRNAs, forming tRNA-cmnm(5)s(2)U34. The sequence is that of tRNA uridine 5-carboxymethylaminomethyl modification enzyme MnmG from Escherichia coli O139:H28 (strain E24377A / ETEC).